A 450-amino-acid chain; its full sequence is Ribulose bisphosphate carboxylase large chain (450 aa).

K4 carries the post-translational modification N6,N6,N6-trimethyllysine. Residues N113 and T163 each coordinate substrate. The active-site Proton acceptor is the K165. K167 contacts substrate. Residues K191, D193, and E194 each coordinate Mg(2+). N6-carboxylysine is present on K191. The Proton acceptor role is filled by H284. Substrate contacts are provided by R285, H317, and S369.

This sequence belongs to the RuBisCO large chain family. Type I subfamily. As to quaternary structure, heterohexadecamer of 8 large chains and 8 small chains; disulfide-linked. The disulfide link is formed within the large subunit homodimers. The cofactor is Mg(2+). In terms of processing, the disulfide bond which can form in the large chain dimeric partners within the hexadecamer appears to be associated with oxidative stress and protein turnover.

The protein resides in the plastid. Its subcellular location is the chloroplast. The catalysed reaction is 2 (2R)-3-phosphoglycerate + 2 H(+) = D-ribulose 1,5-bisphosphate + CO2 + H2O. The enzyme catalyses D-ribulose 1,5-bisphosphate + O2 = 2-phosphoglycolate + (2R)-3-phosphoglycerate + 2 H(+). In terms of biological role, ruBisCO catalyzes two reactions: the carboxylation of D-ribulose 1,5-bisphosphate, the primary event in carbon dioxide fixation, as well as the oxidative fragmentation of the pentose substrate in the photorespiration process. Both reactions occur simultaneously and in competition at the same active site. The protein is Ribulose bisphosphate carboxylase large chain of Sedum rubrotinctum (Jelly bean plant).